A 263-amino-acid polypeptide reads, in one-letter code: Hydroxyethylthiazole kinase 1 (263 aa).

A substrate-binding site is contributed by methionine 42. Positions 118 and 164 each coordinate ATP. Substrate is bound at residue glycine 191.

This sequence belongs to the Thz kinase family. Requires Mg(2+) as cofactor.

The enzyme catalyses 5-(2-hydroxyethyl)-4-methylthiazole + ATP = 4-methyl-5-(2-phosphooxyethyl)-thiazole + ADP + H(+). The protein operates within cofactor biosynthesis; thiamine diphosphate biosynthesis; 4-methyl-5-(2-phosphoethyl)-thiazole from 5-(2-hydroxyethyl)-4-methylthiazole: step 1/1. Catalyzes the phosphorylation of the hydroxyl group of 4-methyl-5-beta-hydroxyethylthiazole (THZ). In Clostridium botulinum (strain 657 / Type Ba4), this protein is Hydroxyethylthiazole kinase 1.